The chain runs to 227 residues: 2,3-bisphosphoglycerate-dependent phosphoglycerate mutase (227 aa).

Substrate-binding positions include 7–14 (RHGFSEWN), 20–21 (TG), Arg-59, 86–89 (ERHY), Lys-97, 113–114 (RR), and 182–183 (GN). His-8 (tele-phosphohistidine intermediate) is an active-site residue. Catalysis depends on Glu-86, which acts as the Proton donor/acceptor.

Belongs to the phosphoglycerate mutase family. BPG-dependent PGAM subfamily. In terms of assembly, homodimer.

It carries out the reaction (2R)-2-phosphoglycerate = (2R)-3-phosphoglycerate. The protein operates within carbohydrate degradation; glycolysis; pyruvate from D-glyceraldehyde 3-phosphate: step 3/5. Functionally, catalyzes the interconversion of 2-phosphoglycerate and 3-phosphoglycerate. The sequence is that of 2,3-bisphosphoglycerate-dependent phosphoglycerate mutase from Glaesserella parasuis serovar 5 (strain SH0165) (Haemophilus parasuis).